The chain runs to 133 residues: Core atranone cluster (CAC) protein 11 (133 aa).

It functions in the pathway mycotoxin biosynthesis. Its function is as follows. Part of the core atranone cluster (CAC) which products are predicted to catalyze most or all steps of mycotoxin atranone synthesis, starting from geranylgeranyl pyrophosphate (GGPP). The initial cyclization of GGPP to dolabellane is probably performed by the terpene cyclase ATR13. The Baeyer-Villiger oxidation near the end of the atranone synthesis, which converts atranones D and E to atranones F and G is predicted to be catalyzed by the monooxygenase ATR8. Of the CAC's other predicted gene products, the reducing PKS ATR6 might synthesize a polyketide chain. This polyketide is probably transferred onto the atranone backbone by the polyketide transferase ATR5. Other predicted CAC products include 4 oxygenases (ATR2, ATR3, ATR4, and ATR14), 3 short-chain reductases (ATR7, ATR9, and ATR10), and a methyltransferase (ATR12). These may all be involved in the various steps of atranone biosynthesis, although their specific roles must await experimental determination. The polypeptide is Core atranone cluster (CAC) protein 11 (Stachybotrys chlorohalonatus (strain IBT 40285)).